The following is a 392-amino-acid chain: 1-deoxy-D-xylulose 5-phosphate reductoisomerase (392 aa).

NADPH is bound by residues threonine 10, glycine 11, serine 12, isoleucine 13, asparagine 38, and asparagine 124. 1-deoxy-D-xylulose 5-phosphate is bound at residue lysine 125. Glutamate 126 is a binding site for NADPH. Aspartate 150 provides a ligand contact to Mn(2+). 1-deoxy-D-xylulose 5-phosphate contacts are provided by serine 151, glutamate 152, serine 176, and histidine 199. Glutamate 152 contributes to the Mn(2+) binding site. Glycine 205 contacts NADPH. 1-deoxy-D-xylulose 5-phosphate-binding residues include serine 212, asparagine 217, lysine 218, and glutamate 221. Residue glutamate 221 participates in Mn(2+) binding.

Belongs to the DXR family. It depends on Mg(2+) as a cofactor. Requires Mn(2+) as cofactor.

The enzyme catalyses 2-C-methyl-D-erythritol 4-phosphate + NADP(+) = 1-deoxy-D-xylulose 5-phosphate + NADPH + H(+). It functions in the pathway isoprenoid biosynthesis; isopentenyl diphosphate biosynthesis via DXP pathway; isopentenyl diphosphate from 1-deoxy-D-xylulose 5-phosphate: step 1/6. Its function is as follows. Catalyzes the NADPH-dependent rearrangement and reduction of 1-deoxy-D-xylulose-5-phosphate (DXP) to 2-C-methyl-D-erythritol 4-phosphate (MEP). The chain is 1-deoxy-D-xylulose 5-phosphate reductoisomerase from Gloeobacter violaceus (strain ATCC 29082 / PCC 7421).